The chain runs to 338 residues: Phenylalanine--tRNA ligase alpha subunit (338 aa).

Glu253 contacts Mg(2+).

The protein belongs to the class-II aminoacyl-tRNA synthetase family. Phe-tRNA synthetase alpha subunit type 1 subfamily. In terms of assembly, tetramer of two alpha and two beta subunits. The cofactor is Mg(2+).

It is found in the cytoplasm. The enzyme catalyses tRNA(Phe) + L-phenylalanine + ATP = L-phenylalanyl-tRNA(Phe) + AMP + diphosphate + H(+). This Legionella pneumophila (strain Lens) protein is Phenylalanine--tRNA ligase alpha subunit.